The primary structure comprises 130 residues: Histone H2A.6 (130 aa).

Residues 1 to 12 (MAGRGKTLGSGG) are compositionally biased toward gly residues. Residues 1–23 (MAGRGKTLGSGGAKKATSRSSKA) are disordered.

This sequence belongs to the histone H2A family. The nucleosome is a histone octamer containing two molecules each of H2A, H2B, H3 and H4 assembled in one H3-H4 heterotetramer and two H2A-H2B heterodimers. The octamer wraps approximately 147 bp of DNA. Interacts with VIP1. In terms of processing, not ubiquitinated. As to expression, low level of expression, mainly in dividing tissues: floral buds, margins of newly emerging leaves, expanding leaves and the meristematic zone of root tips. Also expressed in many non-dividing cells of the elongation zone of the root.

The protein resides in the nucleus. It localises to the chromosome. Its function is as follows. Core component of nucleosome. Nucleosomes wrap and compact DNA into chromatin, limiting DNA accessibility to the cellular machineries which require DNA as a template. Histones thereby play a central role in transcription regulation, DNA repair, DNA replication and chromosomal stability. DNA accessibility is regulated via a complex set of post-translational modifications of histones, also called histone code, and nucleosome remodeling. Required for the T-DNA integration step of plant transformation by Agrobacterium. May play an important role in illegitimate recombination. This is Histone H2A.6 (RAT5) from Arabidopsis thaliana (Mouse-ear cress).